The following is a 95-amino-acid chain: Phospholipase A2 inhibitor gammaCdcPLI (95 aa).

Intrachain disulfides connect C2–C26, C5–C12, C19–C30, and C61–C77.

Forms dimers or higher order oligomers in a temperature-dependent manner in vitro. Expressed by the liver.

The protein localises to the secreted. Inhibits the enzymatic activity of basic and acidic PLA2 from B.jararacussu and B.pauloensis, respectively, in a dose-dependent manner. Also inhibits myotoxicity and cytotoxicity of BnSp-7 of B.pauloensis. The sequence is that of Phospholipase A2 inhibitor gammaCdcPLI from Crotalus durissus collilineatus (Brazilian rattlesnake).